The chain runs to 144 residues: Transcriptional regulator MraZ (144 aa).

SpoVT-AbrB domains are found at residues 5–47 and 76–119; these read EYDH…TLDE and AVEV…DRET.

This sequence belongs to the MraZ family. In terms of assembly, forms oligomers.

It localises to the cytoplasm. It is found in the nucleoid. The sequence is that of Transcriptional regulator MraZ from Staphylococcus aureus.